Reading from the N-terminus, the 245-residue chain is Acetylglutamate kinase (245 aa).

Residues 41–42 (GG), arginine 63, and asparagine 156 contribute to the substrate site.

Belongs to the acetylglutamate kinase family. ArgB subfamily.

The protein resides in the cytoplasm. It catalyses the reaction N-acetyl-L-glutamate + ATP = N-acetyl-L-glutamyl 5-phosphate + ADP. Its pathway is amino-acid biosynthesis; L-arginine biosynthesis; N(2)-acetyl-L-ornithine from L-glutamate: step 2/4. Functionally, catalyzes the ATP-dependent phosphorylation of N-acetyl-L-glutamate. The polypeptide is Acetylglutamate kinase (Streptococcus mutans serotype c (strain ATCC 700610 / UA159)).